We begin with the raw amino-acid sequence, 187 residues long: Small ribosomal subunit protein uS7 (187 aa).

The protein belongs to the universal ribosomal protein uS7 family. As to quaternary structure, part of the 30S ribosomal subunit.

One of the primary rRNA binding proteins, it binds directly to 16S rRNA where it nucleates assembly of the head domain of the 30S subunit. Is located at the subunit interface close to the decoding center. The polypeptide is Small ribosomal subunit protein uS7 (Methanosphaera stadtmanae (strain ATCC 43021 / DSM 3091 / JCM 11832 / MCB-3)).